The primary structure comprises 260 residues: Snake venom serine proteinase 12 (260 aa).

A signal peptide spans 1–18; sequence MVLIRVLANLLILQLSYA. Positions 19–24 are excised as a propeptide; it reads QKSSEL. The Peptidase S1 domain occupies 25–251; sequence VIGGDECNIN…HLDWIQSIIA (227 aa). 6 disulfides stabilise this stretch: Cys-31/Cys-163, Cys-50/Cys-66, Cys-98/Cys-258, Cys-142/Cys-212, Cys-174/Cys-191, and Cys-202/Cys-227. Catalysis depends on His-65, which acts as the Charge relay system. The N-linked (GlcNAc...) asparagine glycan is linked to Asn-103. Catalysis depends on Asp-110, which acts as the Charge relay system. The active-site Charge relay system is Ser-206.

It belongs to the peptidase S1 family. Snake venom subfamily. Monomer. Expressed by the venom gland.

It is found in the secreted. Snake venom serine protease that may act in the hemostasis system of the prey. The polypeptide is Snake venom serine proteinase 12 (Crotalus adamanteus (Eastern diamondback rattlesnake)).